A 932-amino-acid polypeptide reads, in one-letter code: DNA mismatch repair protein MutS (932 aa).

Residue 620–627 participates in ATP binding; sequence GPNMAGKS.

The protein belongs to the DNA mismatch repair MutS family.

Its function is as follows. This protein is involved in the repair of mismatches in DNA. It is possible that it carries out the mismatch recognition step. This protein has a weak ATPase activity. This is DNA mismatch repair protein MutS from Lachnoclostridium phytofermentans (strain ATCC 700394 / DSM 18823 / ISDg) (Clostridium phytofermentans).